Consider the following 247-residue polypeptide: Large ribosomal subunit protein uL3 (247 aa).

2 disordered regions span residues 140 to 164 and 212 to 247; these read SHRS…KMPG and LPKE…KEGA. Gln151 bears the N5-methylglutamine mark. Residues 232–247 are compositionally biased toward basic and acidic residues; the sequence is DEDKAPADTPAEKEGA.

Belongs to the universal ribosomal protein uL3 family. Part of the 50S ribosomal subunit. Forms a cluster with proteins L14 and L19. Methylated by PrmB.

Its function is as follows. One of the primary rRNA binding proteins, it binds directly near the 3'-end of the 23S rRNA, where it nucleates assembly of the 50S subunit. The sequence is that of Large ribosomal subunit protein uL3 from Nitrobacter winogradskyi (strain ATCC 25391 / DSM 10237 / CIP 104748 / NCIMB 11846 / Nb-255).